The primary structure comprises 44 residues: Large ribosomal subunit protein bL34 (44 aa).

2 stretches are compositionally biased toward basic residues: residues 1–22 and 31–44; these read MKRT…RARM and IRAR…RLSV. A disordered region spans residues 1–44; the sequence is MKRTLGGTSRKRKRTSGFRARMRTPDGRNVIRARRKKGRHRLSV.

This sequence belongs to the bacterial ribosomal protein bL34 family.

The protein is Large ribosomal subunit protein bL34 of Nostoc punctiforme (strain ATCC 29133 / PCC 73102).